The sequence spans 347 residues: NADH-ubiquinone oxidoreductase chain 2 (347 aa).

9 helical membrane-spanning segments follow: residues 3-23 (PMTF…VMMS), 59-79 (YFLT…INLL), 89-109 (LINP…LGLA), 150-170 (NLNI…WGGL), 178-198 (IMAY…MYNP), 201-221 (MLLN…LLMI), 237-257 (LPLI…LPPL), 276-296 (IILS…YTRI), and 326-346 (LPLM…TAIL).

This sequence belongs to the complex I subunit 2 family. As to quaternary structure, core subunit of respiratory chain NADH dehydrogenase (Complex I) which is composed of 45 different subunits. Interacts with TMEM242.

The protein resides in the mitochondrion inner membrane. It carries out the reaction a ubiquinone + NADH + 5 H(+)(in) = a ubiquinol + NAD(+) + 4 H(+)(out). In terms of biological role, core subunit of the mitochondrial membrane respiratory chain NADH dehydrogenase (Complex I) which catalyzes electron transfer from NADH through the respiratory chain, using ubiquinone as an electron acceptor. Essential for the catalytic activity and assembly of complex I. The polypeptide is NADH-ubiquinone oxidoreductase chain 2 (Nyctophilus arnhemensis (Northern long-eared bat)).